The following is a 130-amino-acid chain: uncharacterized protein (130 aa).

It belongs to the HesB/IscA family.

This is an uncharacterized protein from Buchnera aphidicola subsp. Acyrthosiphon pisum (strain APS) (Acyrthosiphon pisum symbiotic bacterium).